A 367-amino-acid polypeptide reads, in one-letter code: tRNA-specific 2-thiouridylase MnmA (367 aa).

ATP is bound by residues 9–16 (LMSGGVDS) and Phe-35. The Nucleophile role is filled by Cys-107. An intrachain disulfide couples Cys-107 to Cys-205. Gly-131 contacts ATP. The tract at residues 155–157 (KDQ) is interaction with tRNA. Cys-205 acts as the Cysteine persulfide intermediate in catalysis.

This sequence belongs to the MnmA/TRMU family.

Its subcellular location is the cytoplasm. The enzyme catalyses S-sulfanyl-L-cysteinyl-[protein] + uridine(34) in tRNA + AH2 + ATP = 2-thiouridine(34) in tRNA + L-cysteinyl-[protein] + A + AMP + diphosphate + H(+). Functionally, catalyzes the 2-thiolation of uridine at the wobble position (U34) of tRNA, leading to the formation of s(2)U34. In Petrotoga mobilis (strain DSM 10674 / SJ95), this protein is tRNA-specific 2-thiouridylase MnmA.